A 143-amino-acid chain; its full sequence is Nucleoside diphosphate kinase (143 aa).

Residues Lys-11, Phe-59, Arg-87, Thr-93, Arg-104, and Asn-114 each contribute to the ATP site. Catalysis depends on His-117, which acts as the Pros-phosphohistidine intermediate.

It belongs to the NDK family. In terms of assembly, homotetramer. Requires Mg(2+) as cofactor.

Its subcellular location is the cytoplasm. It carries out the reaction a 2'-deoxyribonucleoside 5'-diphosphate + ATP = a 2'-deoxyribonucleoside 5'-triphosphate + ADP. It catalyses the reaction a ribonucleoside 5'-diphosphate + ATP = a ribonucleoside 5'-triphosphate + ADP. Major role in the synthesis of nucleoside triphosphates other than ATP. The ATP gamma phosphate is transferred to the NDP beta phosphate via a ping-pong mechanism, using a phosphorylated active-site intermediate. In Pseudomonas aeruginosa (strain UCBPP-PA14), this protein is Nucleoside diphosphate kinase.